Here is a 484-residue protein sequence, read N- to C-terminus: MTTLMVQGTTSDAGKSTLVTALCRWLLRQGVGVVPFKPQNMALNSAVTADGGEIGRAQAVQAQACRLAPHTDMNPVLLKPNSDTGAQVIIHGRAVTSMNAVAYHDYKATAMQAVLASHQRLSAAYPVVMVEGAGSPAEINLRAGDIANMGFAEAVDCPVILVADINRGGVFAHLVGTLELLSPSEQARVKGFVINRFRGDIALLQPGLDWLEQRTGKPVLGVLPYVTDLHLEAEDGIDVRQGAKLARVLKVIVPVLPRISNHTDFDPLRLHPQVDLQFIGPGQPIPAADLIILPGSKSVRGDLAQLRERGWDKAIERHLRYGGKLIGICGGLQMLGRQVHDPLGLEGAAGSSQGLGLLDYATVLEAEKQLRNVAGTLNLEAAAVAGYEIHAGVTSGPALERPAVQLADGRCDGAVSADGQILATYLHGLFEGSQSCAALLRWAGLEDVQAIDYEALRERDIERLADLVEKHLDTALLRQLCGVA.

One can recognise a GATase cobBQ-type domain in the interval 248–435; sequence VLKVIVPVLP…LHGLFEGSQS (188 aa). Cys329 functions as the Nucleophile in the catalytic mechanism. The active site involves His427.

This sequence belongs to the CobB/CobQ family. CobQ subfamily.

It functions in the pathway cofactor biosynthesis; adenosylcobalamin biosynthesis. Functionally, catalyzes amidations at positions B, D, E, and G on adenosylcobyrinic A,C-diamide. NH(2) groups are provided by glutamine, and one molecule of ATP is hydrogenolyzed for each amidation. The sequence is that of Cobyric acid synthase from Pseudomonas putida (strain GB-1).